A 321-amino-acid polypeptide reads, in one-letter code: MSKPIVMERGVKYRDADKMALIPVKNVITERDALLRKPEWMKIKLPADSTRIQGIKAAMRKNGLHSVCEEASCPNLAECFNHGTATFMILGAICTRRCPFCDVAHGRPVAPDAEEPQKLAQTIADMALRYVVITSVDRDDLRDGGAQHFADCITAIRAKSPEIKIETLVPDFRGRMDRALEILNATPPDVFNHNLENVPRIYRQVRPGADYNWSLKLLERFKEAHPEIPTKSGLMVGLGETNAEIIEVMRDLRRHGVTMLTLGQYLQPSRHHLPVQRYVSPEEFDEMKAEALAMGFTHAACGPFVRSSYHADLQAKGMEVK.

[4Fe-4S] cluster contacts are provided by C68, C73, C79, C94, C98, C101, and S308. The region spanning 80–297 is the Radical SAM core domain; it reads FNHGTATFMI…KAEALAMGFT (218 aa).

It belongs to the radical SAM superfamily. Lipoyl synthase family. It depends on [4Fe-4S] cluster as a cofactor.

It is found in the cytoplasm. The catalysed reaction is [[Fe-S] cluster scaffold protein carrying a second [4Fe-4S](2+) cluster] + N(6)-octanoyl-L-lysyl-[protein] + 2 oxidized [2Fe-2S]-[ferredoxin] + 2 S-adenosyl-L-methionine + 4 H(+) = [[Fe-S] cluster scaffold protein] + N(6)-[(R)-dihydrolipoyl]-L-lysyl-[protein] + 4 Fe(3+) + 2 hydrogen sulfide + 2 5'-deoxyadenosine + 2 L-methionine + 2 reduced [2Fe-2S]-[ferredoxin]. It functions in the pathway protein modification; protein lipoylation via endogenous pathway; protein N(6)-(lipoyl)lysine from octanoyl-[acyl-carrier-protein]: step 2/2. Its function is as follows. Catalyzes the radical-mediated insertion of two sulfur atoms into the C-6 and C-8 positions of the octanoyl moiety bound to the lipoyl domains of lipoate-dependent enzymes, thereby converting the octanoylated domains into lipoylated derivatives. The protein is Lipoyl synthase of Salmonella arizonae (strain ATCC BAA-731 / CDC346-86 / RSK2980).